We begin with the raw amino-acid sequence, 416 residues long: 4-hydroxy-3-methylbut-2-en-1-yl diphosphate synthase (flavodoxin) (416 aa).

4 residues coordinate [4Fe-4S] cluster: C304, C307, C350, and E357.

It belongs to the IspG family. Requires [4Fe-4S] cluster as cofactor.

It catalyses the reaction (2E)-4-hydroxy-3-methylbut-2-enyl diphosphate + oxidized [flavodoxin] + H2O + 2 H(+) = 2-C-methyl-D-erythritol 2,4-cyclic diphosphate + reduced [flavodoxin]. Its pathway is isoprenoid biosynthesis; isopentenyl diphosphate biosynthesis via DXP pathway; isopentenyl diphosphate from 1-deoxy-D-xylulose 5-phosphate: step 5/6. Its function is as follows. Converts 2C-methyl-D-erythritol 2,4-cyclodiphosphate (ME-2,4cPP) into 1-hydroxy-2-methyl-2-(E)-butenyl 4-diphosphate. The protein is 4-hydroxy-3-methylbut-2-en-1-yl diphosphate synthase (flavodoxin) of Agrobacterium fabrum (strain C58 / ATCC 33970) (Agrobacterium tumefaciens (strain C58)).